The sequence spans 444 residues: Ribitol-5-phosphate xylosyltransferase 1 (444 aa).

Residues 1–9 lie on the Cytoplasmic side of the membrane; the sequence is MRLTRTRLC. Residues 10-30 form a helical; Signal-anchor for type II membrane protein membrane-spanning segment; it reads SLLVALYCLFSIYAAYHVFFG. The Extracellular portion of the chain corresponds to 31 to 444; the sequence is RRRRPLGTTS…ESSFFINNKV (414 aa). The tract at residues 38–79 is disordered; that stretch reads TTSRNSRKAAAAQAKERRGREQSALESEEWNPWEGDEKNEQR. The span at 51–60 shows a compositional bias: basic and acidic residues; the sequence is AKERRGREQS.

The protein belongs to the RXYLT1 family. In terms of assembly, forms a complex composed of FKTN/fukutin, FKRP and RXYLT1/TMEM5.

The protein localises to the golgi apparatus membrane. The catalysed reaction is 3-O-[Rib-ol-P-Rib-ol-P-3-beta-D-GalNAc-(1-&gt;3)-beta-D-GlcNAc-(1-&gt;4)-(O-6-P-alpha-D-Man)]-Thr-[protein] + UDP-alpha-D-xylose = 3-O-[beta-D-Xyl-(1-&gt;4)-Rib-ol-P-Rib-ol-P-3-beta-D-GalNAc-(1-&gt;3)-beta-D-GlcNAc-(1-&gt;4)-(O-6-P-alpha-D-Man)]-Thr-[protein] + UDP + H(+). It functions in the pathway protein modification; protein glycosylation. Its function is as follows. Acts as a UDP-D-xylose:ribitol-5-phosphate beta1,4-xylosyltransferase, which catalyzes the transfer of UDP-D-xylose to ribitol 5-phosphate (Rbo5P) to form the Xylbeta1-4Rbo5P linkage on O-mannosyl glycan. Participates in the biosynthesis of the phosphorylated O-mannosyl trisaccharide (N-acetylgalactosamine-beta-3-N-acetylglucosamine-beta-4-(phosphate-6-)mannose), a carbohydrate structure present in alpha-dystroglycan (DAG1), which is required for binding laminin G-like domain-containing extracellular proteins with high affinity. The polypeptide is Ribitol-5-phosphate xylosyltransferase 1 (Mus musculus (Mouse)).